A 113-amino-acid chain; its full sequence is Large ribosomal subunit protein uL22 (113 aa).

This sequence belongs to the universal ribosomal protein uL22 family. In terms of assembly, part of the 50S ribosomal subunit.

This protein binds specifically to 23S rRNA; its binding is stimulated by other ribosomal proteins, e.g. L4, L17, and L20. It is important during the early stages of 50S assembly. It makes multiple contacts with different domains of the 23S rRNA in the assembled 50S subunit and ribosome. Functionally, the globular domain of the protein is located near the polypeptide exit tunnel on the outside of the subunit, while an extended beta-hairpin is found that lines the wall of the exit tunnel in the center of the 70S ribosome. The chain is Large ribosomal subunit protein uL22 from Geobacillus stearothermophilus (Bacillus stearothermophilus).